Here is a 73-residue protein sequence, read N- to C-terminus: Large ribosomal subunit protein bL31 (73 aa).

It belongs to the bacterial ribosomal protein bL31 family. Type A subfamily. In terms of assembly, part of the 50S ribosomal subunit.

In terms of biological role, binds the 23S rRNA. The protein is Large ribosomal subunit protein bL31 of Bartonella tribocorum (strain CIP 105476 / IBS 506).